The chain runs to 638 residues: Ubiquitin-like-specific protease 2 (638 aa).

Basic and acidic residues predominate over residues 1–12; the sequence is MRDSKDALDDKS. Disordered regions lie at residues 1 to 79 and 238 to 314; these read MRDS…PKHL and PQKT…TSND. The span at 238–249 shows a compositional bias: polar residues; it reads PQKTVRSIVKQT. Residues 250–264 are compositionally biased toward low complexity; the sequence is SSPHSSKMPKHSLPS. Residues 267-314 are compositionally biased toward polar residues; it reads TPFNSNSGDSLLSRIKNSNQSSSERPTANNGAQEQNQSSSSAGNTSND. Residues His440 and Asp494 contribute to the active site. Thr526 carries the phosphothreonine modification. Cys544 is a catalytic residue. The segment covering 610–619 has biased composition (polar residues); that stretch reads NERQSLSSGS. Residues 610 to 638 are disordered; sequence NERQSLSSGSNDEEDKENDDDLAILPITN. Residues 620–631 are compositionally biased toward acidic residues; sequence NDEEDKENDDDL.

The protein belongs to the peptidase C48 family.

The protein localises to the nucleus. The sequence is that of Ubiquitin-like-specific protease 2 (ulp2) from Schizosaccharomyces pombe (strain 972 / ATCC 24843) (Fission yeast).